The chain runs to 261 residues: Proteasome subunit beta type-2 (261 aa).

The propeptide at 1 to 29 (MAGLSFDNYQRNNFLAENSHTQPKATSTG) is removed in mature form. The active-site Nucleophile is the Thr-30.

Belongs to the peptidase T1B family. As to quaternary structure, the 26S proteasome consists of a 20S proteasome core and two 19S regulatory subunits. The 20S proteasome core is composed of 28 subunits that are arranged in four stacked rings, resulting in a barrel-shaped structure. The two end rings are each formed by seven alpha subunits, and the two central rings are each formed by seven beta subunits. The catalytic chamber with the active sites is on the inside of the barrel.

The protein resides in the cytoplasm. It is found in the nucleus. It carries out the reaction Cleavage of peptide bonds with very broad specificity.. Functionally, the proteasome degrades poly-ubiquitinated proteins in the cytoplasm and in the nucleus. It is essential for the regulated turnover of proteins and for the removal of misfolded proteins. The proteasome is a multicatalytic proteinase complex that is characterized by its ability to cleave peptides with Arg, Phe, Tyr, Leu, and Glu adjacent to the leaving group at neutral or slightly basic pH. It has an ATP-dependent proteolytic activity. This Saccharomyces cerevisiae (strain ATCC 204508 / S288c) (Baker's yeast) protein is Proteasome subunit beta type-2 (PUP1).